The chain runs to 243 residues: Probable transcriptional regulatory protein BDI_1233 (243 aa).

The protein belongs to the TACO1 family.

The protein localises to the cytoplasm. This Parabacteroides distasonis (strain ATCC 8503 / DSM 20701 / CIP 104284 / JCM 5825 / NCTC 11152) protein is Probable transcriptional regulatory protein BDI_1233.